The following is a 270-amino-acid chain: Karrikin insensitive 2 receptor CA (270 aa).

The active-site Nucleophile is Ser95. Catalysis depends on residues Asp217 and His246.

Belongs to the AB hydrolase superfamily. As to expression, expressed in stigma.

Its subcellular location is the nucleus. The protein resides in the cytoplasm. Functionally, hydrolase which may be involved in plant olfaction during volatile communication. The sequence is that of Karrikin insensitive 2 receptor CA from Petunia hybrida (Petunia).